The chain runs to 800 residues: U4/U6.U5 tri-snRNP-associated protein 1 (800 aa).

Residues 1–120 (MGSSKKHRGE…SSGDASSLSI (120 aa)) form a disordered region. Residues 32–42 (HREHKKHKHRS) are compositionally biased toward basic residues. Over residues 58–101 (ERGGERGSGRRGAEAEARSSTHGRERSQAEPSERRVKREKRDDG) the composition is skewed to basic and acidic residues. Over residues 104–119 (AAASSKTSSGDASSLS) the composition is skewed to low complexity. Residues K125 and K133 each participate in a glycyl lysine isopeptide (Lys-Gly) (interchain with G-Cter in SUMO2) cross-link. A Glycyl lysine isopeptide (Lys-Gly) (interchain with G-Cter in SUMO1); alternate cross-link involves residue K141. A Glycyl lysine isopeptide (Lys-Gly) (interchain with G-Cter in SUMO2); alternate cross-link involves residue K141. Glycyl lysine isopeptide (Lys-Gly) (interchain with G-Cter in SUMO2) cross-links involve residues K147 and K188. Residues 157–231 (NPMALRQREE…KLLEEMDQEF (75 aa)) adopt a coiled-coil conformation. Residue T189 is modified to Phosphothreonine. K277 participates in a covalent cross-link: Glycyl lysine isopeptide (Lys-Gly) (interchain with G-Cter in SUMO2). The tract at residues 311 to 330 (PDYLPYAEDESVDDLAQQKP) is disordered. S321 is subject to Phosphoserine. Residues K329 and K336 each participate in a glycyl lysine isopeptide (Lys-Gly) (interchain with G-Cter in SUMO2) cross-link. The residue at position 348 (S348) is a Phosphoserine. T392 carries the phosphothreonine modification. Residues K400 and K414 each participate in a glycyl lysine isopeptide (Lys-Gly) (interchain with G-Cter in SUMO2) cross-link. Residues 419–497 (RADDLLPLGD…QVLEEDEAEL (79 aa)) are disordered. T430 bears the Phosphothreonine mark. Residues S448, S474, S486, and S521 each carry the phosphoserine modification. Positions 490–533 (LEEDEAELELQKQLEKGRRLRQLQQLQQLRDSGEKVVEIVKKLE) form a coiled coil. Residue K548 forms a Glycyl lysine isopeptide (Lys-Gly) (interchain with G-Cter in SUMO2) linkage. The disordered stretch occupies residues 571–604 (LAGNREEQEELMDFERDEERSANGGSESDGEENI). Phosphoserine is present on residues S591, S596, S598, and S621. Residues K648, K657, and K684 each participate in a glycyl lysine isopeptide (Lys-Gly) (interchain with G-Cter in SUMO2) cross-link. T695 is modified (phosphothreonine). Residues K699, K709, K723, K749, and K758 each participate in a glycyl lysine isopeptide (Lys-Gly) (interchain with G-Cter in SUMO2) cross-link. Residue S761 is modified to Phosphoserine. T764 carries the post-translational modification Phosphothreonine. Glycyl lysine isopeptide (Lys-Gly) (interchain with G-Cter in SUMO2) cross-links involve residues K775 and K780. At S789 the chain carries Phosphoserine. Residue K791 forms a Glycyl lysine isopeptide (Lys-Gly) (interchain with G-Cter in SUMO2) linkage.

Belongs to the SNU66/SART1 family. As to quaternary structure, identified in the spliceosome C complex. Component of the U4/U6-U5 tri-snRNP complex composed of the U4, U6 and U5 snRNAs and at least PRPF3, PRPF4, PRPF6, PRPF8, PRPF31, SNRNP200, TXNL4A, SNRNP40, DDX23, CD2BP2, PPIH, SNU13, EFTUD2, SART1 and USP39. Interacts with UBL5. Interacts with IVNS1ABP (via Kelch repeats). Sumoylated with SUMO2. As to expression, ubiquitously expressed.

Its subcellular location is the nucleus. Plays a role in mRNA splicing as a component of the U4/U6-U5 tri-snRNP, one of the building blocks of the spliceosome. May also bind to DNA. This chain is U4/U6.U5 tri-snRNP-associated protein 1 (SART1), found in Homo sapiens (Human).